A 1004-amino-acid polypeptide reads, in one-letter code: Retrovirus-related Pol polyprotein from type-1 retrotransposable element R1 (1004 aa).

In terms of domain architecture, Reverse transcriptase spans 450-717 (QCLLESYFPQ…SEVKHLGIFV (268 aa)). The interval 853–1004 (LSGSQFKELL…RLMRGMRIRE (152 aa)) is nucleic acid-binding endonuclease.

The catalysed reaction is DNA(n) + a 2'-deoxyribonucleoside 5'-triphosphate = DNA(n+1) + diphosphate. The sequence is that of Retrovirus-related Pol polyprotein from type-1 retrotransposable element R1 from Bradysia coprophila (Dark-winged fungus gnat).